The following is a 308-amino-acid chain: Testis-expressed protein 52 (308 aa).

As to expression, expressed in Testis.

The polypeptide is Testis-expressed protein 52 (Mus musculus (Mouse)).